Reading from the N-terminus, the 182-residue chain is Protein LURP-one-related 7 (182 aa).

Belongs to the LOR family.

Might be related to the phospholipid scramblase and tubby-like superfamily of membrane tethered transcription factors. In Arabidopsis thaliana (Mouse-ear cress), this protein is Protein LURP-one-related 7.